The chain runs to 499 residues: Transcriptional regulator sdnM (499 aa).

The protein localises to the nucleus. It functions in the pathway antibiotic biosynthesis. Transcriptional regulator; part of the gene cluster that mediates the biosynthesis of sordarin and hypoxysordarin, glycoside antibiotics with a unique tetracyclic diterpene aglycone structure. First, the geranylgeranyl diphosphate synthase sdnC constructs GGDP from farnesyl diphosphate and isopentenyl diphosphate. The diterpene cyclase sdnA then catalyzes the cyclization of GGDP to afford cycloaraneosene. Cycloaraneosene is then hydroxylated four times by the putative cytochrome P450 monooxygenases sdnB, sdnE, sdnF and sdnH to give a hydroxylated cycloaraneosene derivative such as cycloaraneosene-8,9,13,19-tetraol. Although the order of the hydroxylations is unclear, at least C8, C9 and C13 of the cycloaraneosene skeleton are hydroxylated before the sordaricin formation. Dehydration of the 13-hydroxy group of the hydroxylated cycloaraneosene derivative might be catalyzed by an unassigned hypothetical protein such as sdnG and sdnP to construct the cyclopentadiene moiety. The FAD-dependent oxidoreductase sdnN is proposed to catalyze the oxidation at C9 of the hydroxylated cycloaraneosene derivative and also catalyze the Baeyer-Villiger oxidation to give the lactone intermediate. The presumed lactone intermediate would be hydrolyzed to give an acrolein moiety and a carboxylate moiety. Then, [4+2]cycloaddition would occur between the acrolein moiety and the cyclopentadiene moiety to give sordaricin. SdnN might also be involved in the [4+2]cycloaddition after the hypothesized oxidation to accommodate the oxidized product and prompt the [4+2]cycloaddition. GDP-6-deoxy-D-altrose may be biosynthesized from GDP-D-mannose by the putative GDP-mannose-4,6-dehydratase sdnI and the short-chain dehydrogenase sdnK. The glycosyltransferase sdnJ catalyzes the attachment of 6-deoxy-D-altrose onto the 19-hydroxy group of sordaricin to give 4'-O-demethylsordarin. The methyltransferase sdnD would complete the biosynthesis of sordarin. Sordarin can be further modified into hypoxysordarin. The unique acyl chain at the 3'-hydroxy group of hypoxysordarin would be constructed by an iterative type I PKS sdnO and the trans-acting polyketide methyltransferase sdnL. SdnL would be responsible for the introduction of an alpha-methyl group of the polyketide chain. Alternatively, the beta-lactamase-like protein sdnR might be responsible for the cleavage and transfer of the polyketide chain from the PKS sdnO to sordarin. Two putative cytochrome P450 monooxygenases, sdnQ and sdnT, might catalyze the epoxidations of the polyketide chain to complete the biosynthesis of hypoxysordarin. Transcriptional regulators sdnM and sdnS are presumably encoded for the transcriptional regulation of the expression of the sdn gene cluster. In Sordaria araneosa (Pleurage araneosa), this protein is Transcriptional regulator sdnM.